A 346-amino-acid chain; its full sequence is Phenylalanine--tRNA ligase alpha subunit (346 aa).

Glu-258 lines the Mg(2+) pocket.

It belongs to the class-II aminoacyl-tRNA synthetase family. Phe-tRNA synthetase alpha subunit type 1 subfamily. In terms of assembly, tetramer of two alpha and two beta subunits. It depends on Mg(2+) as a cofactor.

It is found in the cytoplasm. It catalyses the reaction tRNA(Phe) + L-phenylalanine + ATP = L-phenylalanyl-tRNA(Phe) + AMP + diphosphate + H(+). The protein is Phenylalanine--tRNA ligase alpha subunit of Protochlamydia amoebophila (strain UWE25).